The primary structure comprises 299 residues: ATP phosphoribosyltransferase (299 aa).

The protein belongs to the ATP phosphoribosyltransferase family. Long subfamily. Requires Mg(2+) as cofactor.

It localises to the cytoplasm. It catalyses the reaction 1-(5-phospho-beta-D-ribosyl)-ATP + diphosphate = 5-phospho-alpha-D-ribose 1-diphosphate + ATP. It functions in the pathway amino-acid biosynthesis; L-histidine biosynthesis; L-histidine from 5-phospho-alpha-D-ribose 1-diphosphate: step 1/9. Its activity is regulated as follows. Feedback inhibited by histidine. Catalyzes the condensation of ATP and 5-phosphoribose 1-diphosphate to form N'-(5'-phosphoribosyl)-ATP (PR-ATP). Has a crucial role in the pathway because the rate of histidine biosynthesis seems to be controlled primarily by regulation of HisG enzymatic activity. In Shewanella sp. (strain MR-7), this protein is ATP phosphoribosyltransferase.